Consider the following 103-residue polypeptide: uncharacterized protein (103 aa).

This is an uncharacterized protein from Sinorhizobium fredii (strain NBRC 101917 / NGR234).